A 350-amino-acid polypeptide reads, in one-letter code: Phosphoribosylformylglycinamidine cyclo-ligase (350 aa).

The protein belongs to the AIR synthase family.

The protein resides in the cytoplasm. The catalysed reaction is 2-formamido-N(1)-(5-O-phospho-beta-D-ribosyl)acetamidine + ATP = 5-amino-1-(5-phospho-beta-D-ribosyl)imidazole + ADP + phosphate + H(+). It participates in purine metabolism; IMP biosynthesis via de novo pathway; 5-amino-1-(5-phospho-D-ribosyl)imidazole from N(2)-formyl-N(1)-(5-phospho-D-ribosyl)glycinamide: step 2/2. This chain is Phosphoribosylformylglycinamidine cyclo-ligase, found in Cupriavidus necator (strain ATCC 17699 / DSM 428 / KCTC 22496 / NCIMB 10442 / H16 / Stanier 337) (Ralstonia eutropha).